We begin with the raw amino-acid sequence, 71 residues long: Exodeoxyribonuclease 7 small subunit (71 aa).

Belongs to the XseB family. As to quaternary structure, heterooligomer composed of large and small subunits.

Its subcellular location is the cytoplasm. The enzyme catalyses Exonucleolytic cleavage in either 5'- to 3'- or 3'- to 5'-direction to yield nucleoside 5'-phosphates.. Its function is as follows. Bidirectionally degrades single-stranded DNA into large acid-insoluble oligonucleotides, which are then degraded further into small acid-soluble oligonucleotides. The protein is Exodeoxyribonuclease 7 small subunit of Clostridium botulinum (strain ATCC 19397 / Type A).